The sequence spans 665 residues: Phosphatidylinositol-3-phosphate phosphatase MTMR1 (665 aa).

Met-1 is subject to N-acetylmethionine. Residues 1–11 are compositionally biased toward low complexity; that stretch reads MDRPAAAAAAG. A disordered region spans residues 1 to 51; it reads MDRPAAAAAAGCEGGGGPNPGPAGGRRPPRAAGGATAGSRQPSVETLDSPT. Gly residues predominate over residues 12 to 24; it reads CEGGGGPNPGPAG. A compositionally biased stretch (polar residues) spans 39 to 51; it reads SRQPSVETLDSPT. 2 positions are modified to phosphoserine: Ser-43 and Ser-49. The region spanning 90 to 161 is the GRAM domain; that stretch reads NKLAQMEEAP…GVISRVEKIG (72 aa). The region spanning 226–601 is the Myotubularin phosphatase domain; that stretch reads GWKVYDPVSE…SHLELWVNYY (376 aa). A 1,2-diacyl-sn-glycero-3-phospho-(1D-myo-inositol-3-phosphate)-binding residues include Asn-351, Asn-376, and Ile-377. Cys-438 functions as the Phosphocysteine intermediate in the catalytic mechanism. 7 residues coordinate a 1,2-diacyl-sn-glycero-3-phospho-(1D-myo-inositol-3-phosphate): Ser-439, Asp-440, Gly-441, Trp-442, Asp-443, Arg-444, and Arg-484. Ser-439 serves as a coordination point for phosphate. Gly-441, Trp-442, Asp-443, and Arg-444 together coordinate phosphate. Positions 608–665 are required for dimerization; it reads MRPQMPIHQNLKELLAVRAELQKRVEGLQREVATRAVSSSSERGSSPSHSATSVHTSV. The interval 642-665 is disordered; it reads RAVSSSSERGSSPSHSATSVHTSV. A compositionally biased stretch (low complexity) spans 645-657; it reads SSSSERGSSPSHS.

Belongs to the protein-tyrosine phosphatase family. Non-receptor class myotubularin subfamily. Homodimer.

The protein resides in the cell membrane. It localises to the cytoplasm. The catalysed reaction is a 1,2-diacyl-sn-glycero-3-phospho-(1D-myo-inositol-3-phosphate) + H2O = a 1,2-diacyl-sn-glycero-3-phospho-(1D-myo-inositol) + phosphate. It catalyses the reaction 1,2-dioctanoyl-sn-glycero-3-phospho-(1-D-myo-inositol-3-phosphate) + H2O = 1,2-dioctanoyl-sn-glycero-3-phospho-(1D-myo-inositol) + phosphate. It carries out the reaction a 1,2-diacyl-sn-glycero-3-phospho-(1D-myo-inositol-3,5-bisphosphate) + H2O = a 1,2-diacyl-sn-glycero-3-phospho-(1D-myo-inositol-5-phosphate) + phosphate. In terms of biological role, lipid phosphatase that specifically dephosphorylates the D-3 position of phosphatidylinositol 3-phosphate, generating phosphatidylinositol. Could also dephosphorylate phosphatidylinositol 3,5-bisphosphate to produce phosphatidylinositol 5-phosphate. This is Phosphatidylinositol-3-phosphate phosphatase MTMR1 from Homo sapiens (Human).